Reading from the N-terminus, the 517-residue chain is Phosphatase and actin regulator 3 (517 aa).

Residues 1–24 form a disordered region; that stretch reads MDQTPPARSEPLVSGIRTPPVRRN. At threonine 29 the chain carries Phosphothreonine. Disordered regions lie at residues 41–247 and 260–320; these read KKKN…RPLP and ATKH…SEEN. The RPEL 1 repeat unit spans residues 52-77; that stretch reads SALEKKMAGRQGREELIKQGLLEMME. Residues 54–68 are compositionally biased toward basic and acidic residues; sequence LEKKMAGRQGREELI. 2 stretches are compositionally biased toward polar residues: residues 92 to 129 and 157 to 172; these read QPAQSEPSAGEQETLTSEGVQPGSPSASGTDQASQDEL and LPTTDEPSQEALSGSL. Pro residues predominate over residues 187–198; the sequence is PSPPLLPTPPPK. A Phosphoserine modification is found at serine 188. Threonine 194 carries the post-translational modification Phosphothreonine. The span at 260 to 300 shows a compositional bias: basic and acidic residues; that stretch reads ATKHRQDSFQGRECRGSPKKRMDVRLSRTSSMERGKERDEA. RPEL repeat units lie at residues 359–384, 397–422, and 435–460; these read ELLAVKLRNRPSKQELEDRNIFPRRT, MKLSKRLSQRPAVEELERRNILKQRN, and QRLTRKLNQRPTVDELRDRKILIRFS. A coiled-coil region spans residues 408 to 444; sequence AVEELERRNILKQRNDQTEQEERREIKQRLTRKLNQR.

This sequence belongs to the phosphatase and actin regulator family. As to quaternary structure, binds actin and PPP1CA; thus inhibiting the protein phosphatase 1 (PP1) activity. In terms of tissue distribution, diffusely expressed throughout the brain cortex, with highest levels in the cortex and the hippocampus and lower levels in the striatum and thalamus.

It localises to the nucleus matrix. The protein is Phosphatase and actin regulator 3 (Phactr3) of Rattus norvegicus (Rat).